Here is a 142-residue protein sequence, read N- to C-terminus: Peptide methionine sulfoxide reductase MsrB (142 aa).

Residues 3-126 form the MsrB domain; it reads KEELKKKLSP…NSAALRFIPF (124 aa). Cysteine 115 acts as the Nucleophile in catalysis.

The protein belongs to the MsrB Met sulfoxide reductase family.

It carries out the reaction L-methionyl-[protein] + [thioredoxin]-disulfide + H2O = L-methionyl-(R)-S-oxide-[protein] + [thioredoxin]-dithiol. The protein is Peptide methionine sulfoxide reductase MsrB of Lactococcus lactis subsp. cremoris (strain SK11).